The sequence spans 625 residues: MRQVMNAIPDDLLITAPDEVRIRQDLVLTALGHRPADRSLRVGRLLDVHSRTWSEDQEIVIKGRRIAWVGPAGSYPGEVRERVHRPDVAAVPGFGEVHKHIESSHLTPEWEAALVLPHGNTWTCEASHEFSNVNGARNLEFWFEARRRGSPLKIFPQPGSAVPPTAYEWGGGWYGRDEQARFMAESLMVTGLDEVMDWPAVWNPDNPSYKRLWGMIEATFAARGVVEGHASGLRDLPSINAFAAAGLASDHEVQTPEETWDKLTRGLFVELRVYAMDEIVRWLLAKGLQDWSQIAFTTDDRSASHTLELGASDHNARLAIEAGLAPEIAIQCLTINPARHMRLTPFVGSLAPGRFGDVVLLSDVGKLTIAEVWADGVQISEGERYIGQVPEIVWPDWATKTVNIKRSIKPQDFELRAEPGRATMKAAVIRPFHWHPEFYTLELPVRDGAVQRDESEAITKFAIVDRFSGDGRIAKMFWRGCGPRTPETAVACSVAHDKHNIWVVGSSDAAMAKAVNALIELQGGWALVREGELVATVRFEVGGLMSCRSAQALDAEMQALYAEGRKVDWMYEPTYRPRWYPGFPERLMFATLTCAPWSWVLVAPCEQAPLGFINVQTGEAHPVIW.

This sequence belongs to the metallo-dependent hydrolases superfamily. Adenine deaminase family. It depends on Mn(2+) as a cofactor.

It catalyses the reaction adenine + H2O + H(+) = hypoxanthine + NH4(+). The chain is Adenine deaminase 2 from Bradyrhizobium diazoefficiens (strain JCM 10833 / BCRC 13528 / IAM 13628 / NBRC 14792 / USDA 110).